A 616-amino-acid polypeptide reads, in one-letter code: Proline--tRNA ligase (616 aa).

Belongs to the class-II aminoacyl-tRNA synthetase family. ProS type 1 subfamily. In terms of assembly, homodimer.

It localises to the cytoplasm. The catalysed reaction is tRNA(Pro) + L-proline + ATP = L-prolyl-tRNA(Pro) + AMP + diphosphate. Its function is as follows. Catalyzes the attachment of proline to tRNA(Pro) in a two-step reaction: proline is first activated by ATP to form Pro-AMP and then transferred to the acceptor end of tRNA(Pro). As ProRS can inadvertently accommodate and process non-cognate amino acids such as alanine and cysteine, to avoid such errors it has two additional distinct editing activities against alanine. One activity is designated as 'pretransfer' editing and involves the tRNA(Pro)-independent hydrolysis of activated Ala-AMP. The other activity is designated 'posttransfer' editing and involves deacylation of mischarged Ala-tRNA(Pro). The misacylated Cys-tRNA(Pro) is not edited by ProRS. This chain is Proline--tRNA ligase, found in Lactococcus lactis subsp. cremoris (strain MG1363).